Reading from the N-terminus, the 87-residue chain is Acyl-CoA-binding protein 2 (87 aa).

One can recognise an ACB domain in the interval 2–87; that stretch reads VSQLFEEKAK…VDNLIAKYSS (86 aa). Residues 29-33, Lys-51, Lys-55, and Tyr-74 contribute to the an acyl-CoA site; that span reads YGLYK.

Belongs to the ACBP family.

In terms of biological role, binds medium- and long-chain acyl-CoA esters with very high affinity and may function as an intracellular carrier of acyl-CoA esters. This chain is Acyl-CoA-binding protein 2 (ACB2), found in Saccharomyces pastorianus (strain ATCC 76670 / Carlsberg bottom yeast no.2 / CBS 1503 / CLIB 180 / NBRC 10610 / NRRL Y-1525) (Saaz-type lager yeast).